The following is a 235-amino-acid chain: Phosphoribosylaminoimidazole-succinocarboxamide synthase (235 aa).

The protein belongs to the SAICAR synthetase family.

The enzyme catalyses 5-amino-1-(5-phospho-D-ribosyl)imidazole-4-carboxylate + L-aspartate + ATP = (2S)-2-[5-amino-1-(5-phospho-beta-D-ribosyl)imidazole-4-carboxamido]succinate + ADP + phosphate + 2 H(+). It functions in the pathway purine metabolism; IMP biosynthesis via de novo pathway; 5-amino-1-(5-phospho-D-ribosyl)imidazole-4-carboxamide from 5-amino-1-(5-phospho-D-ribosyl)imidazole-4-carboxylate: step 1/2. This Streptococcus pneumoniae (strain 70585) protein is Phosphoribosylaminoimidazole-succinocarboxamide synthase.